Reading from the N-terminus, the 456-residue chain is Cysteine--tRNA ligase (456 aa).

Cysteine 28 is a Zn(2+) binding site. The 'HIGH' region signature appears at 30–40 (ITVYDHCHLGH). The Zn(2+) site is built by cysteine 209, histidine 234, and glutamate 238. The 'KMSKS' region motif lies at 266–270 (KMAKS). Lysine 269 serves as a coordination point for ATP.

It belongs to the class-I aminoacyl-tRNA synthetase family. As to quaternary structure, monomer. The cofactor is Zn(2+).

It localises to the cytoplasm. The enzyme catalyses tRNA(Cys) + L-cysteine + ATP = L-cysteinyl-tRNA(Cys) + AMP + diphosphate. This Legionella pneumophila subsp. pneumophila (strain Philadelphia 1 / ATCC 33152 / DSM 7513) protein is Cysteine--tRNA ligase.